The following is a 170-amino-acid chain: MTARPKKPSPQDGFFWKTKTLEQLSPTEWESLCDGCARCCLEKLEDEDTGRIYFTHVGCRLLDGDACACRDYPNRSDRVPDCVRLTPKEVRELTWLPPSCAYKLVADGRDLYWWHPLISGDPNTVHEAGVSVRGRVERTETEIPVEELEDHIVSWPALLPKRAKLKQRPR.

This sequence belongs to the UPF0260 family.

This Rhodopseudomonas palustris (strain TIE-1) protein is UPF0260 protein Rpal_2074.